A 242-amino-acid chain; its full sequence is Type III pantothenate kinase (242 aa).

6–13 contributes to the ATP binding site; sequence DAGNTRLK. Residues tyrosine 90 and 97-100 contribute to the substrate site; that span reads GADR. Aspartate 99 acts as the Proton acceptor in catalysis. Aspartate 119 lines the K(+) pocket. Serine 122 is a binding site for ATP. Threonine 174 is a substrate binding site.

Belongs to the type III pantothenate kinase family. Homodimer. Requires NH4(+) as cofactor. The cofactor is K(+).

Its subcellular location is the cytoplasm. The enzyme catalyses (R)-pantothenate + ATP = (R)-4'-phosphopantothenate + ADP + H(+). Its pathway is cofactor biosynthesis; coenzyme A biosynthesis; CoA from (R)-pantothenate: step 1/5. Its function is as follows. Catalyzes the phosphorylation of pantothenate (Pan), the first step in CoA biosynthesis. This Marinobacter nauticus (strain ATCC 700491 / DSM 11845 / VT8) (Marinobacter aquaeolei) protein is Type III pantothenate kinase.